Reading from the N-terminus, the 241-residue chain is MPFLCVNVDHVATIRQARLGIEPDPVTAAAMCELAGAVGIIMHLREDRRHVQDRDIELISKTIQTEFHFEMAATEEMQQIALRIDPATVCLVPEKREELTTEGGLNCIGQEKRLTEYLAPLHEKGIGSSLFIDADADQIKAAKAIGAEYVEIHTGHFADAPTRSEQKAELTRIIDGIKMSQDLGLKVNLGHGLNYVNILDFADVPGICEYSIGHSIMSRAIYVGIDRAVRDMVEIIRNFAD.

A 3-amino-2-oxopropyl phosphate-binding site is contributed by Asn7. A 1-deoxy-D-xylulose 5-phosphate-binding site is contributed by 9-10 (DH). Arg18 contacts 3-amino-2-oxopropyl phosphate. The Proton acceptor role is filled by His43. Residues Arg45 and His50 each coordinate 1-deoxy-D-xylulose 5-phosphate. Glu70 functions as the Proton acceptor in the catalytic mechanism. Position 100 (Thr100) interacts with 1-deoxy-D-xylulose 5-phosphate. The Proton donor role is filled by His191. Residues Gly192 and 213 to 214 (GH) each bind 3-amino-2-oxopropyl phosphate.

It belongs to the PNP synthase family. Homooctamer; tetramer of dimers.

The protein resides in the cytoplasm. The enzyme catalyses 3-amino-2-oxopropyl phosphate + 1-deoxy-D-xylulose 5-phosphate = pyridoxine 5'-phosphate + phosphate + 2 H2O + H(+). The protein operates within cofactor biosynthesis; pyridoxine 5'-phosphate biosynthesis; pyridoxine 5'-phosphate from D-erythrose 4-phosphate: step 5/5. Functionally, catalyzes the complicated ring closure reaction between the two acyclic compounds 1-deoxy-D-xylulose-5-phosphate (DXP) and 3-amino-2-oxopropyl phosphate (1-amino-acetone-3-phosphate or AAP) to form pyridoxine 5'-phosphate (PNP) and inorganic phosphate. The chain is Pyridoxine 5'-phosphate synthase from Maridesulfovibrio salexigens (strain ATCC 14822 / DSM 2638 / NCIMB 8403 / VKM B-1763) (Desulfovibrio salexigens).